The primary structure comprises 108 residues: Probable 4-amino-4-deoxy-L-arabinose-phosphoundecaprenol flippase subunit ArnE (108 aa).

3 helical membrane-spanning segments follow: residues 32-52 (PLLLWLGGSVLLLGMAMLVWL), 58-78 (VPVGVAYPMLSLNFIFVTLAA), and 85-105 (TLSLRHALGVILIVAGVAIMG). Residues 34 to 106 (LLWLGGSVLL…IVAGVAIMGS (73 aa)) form the EamA domain.

The protein belongs to the ArnE family. Heterodimer of ArnE and ArnF.

The protein resides in the cell inner membrane. It functions in the pathway bacterial outer membrane biogenesis; lipopolysaccharide biosynthesis. Its function is as follows. Translocates 4-amino-4-deoxy-L-arabinose-phosphoundecaprenol (alpha-L-Ara4N-phosphoundecaprenol) from the cytoplasmic to the periplasmic side of the inner membrane. The chain is Probable 4-amino-4-deoxy-L-arabinose-phosphoundecaprenol flippase subunit ArnE from Erwinia tasmaniensis (strain DSM 17950 / CFBP 7177 / CIP 109463 / NCPPB 4357 / Et1/99).